A 450-amino-acid chain; its full sequence is Signal recognition particle 54 kDa protein (450 aa).

GTP-binding positions include 107-114, 188-192, and 247-250; these read GIQGSGKT, DTAGR, and TKLD.

The protein belongs to the GTP-binding SRP family. SRP54 subfamily. As to quaternary structure, part of the signal recognition particle protein translocation system, which is composed of SRP and FtsY. Archaeal SRP consists of a 7S RNA molecule of 300 nucleotides and two protein subunits: SRP54 and SRP19.

The protein localises to the cytoplasm. It catalyses the reaction GTP + H2O = GDP + phosphate + H(+). Its function is as follows. Involved in targeting and insertion of nascent membrane proteins into the cytoplasmic membrane. Binds to the hydrophobic signal sequence of the ribosome-nascent chain (RNC) as it emerges from the ribosomes. The SRP-RNC complex is then targeted to the cytoplasmic membrane where it interacts with the SRP receptor FtsY. This Methanococcus maripaludis (strain C6 / ATCC BAA-1332) protein is Signal recognition particle 54 kDa protein.